The following is a 375-amino-acid chain: DNA replication and repair protein RecF (375 aa).

30 to 37 (GENAQGKT) serves as a coordination point for ATP.

This sequence belongs to the RecF family.

The protein localises to the cytoplasm. Functionally, the RecF protein is involved in DNA metabolism; it is required for DNA replication and normal SOS inducibility. RecF binds preferentially to single-stranded, linear DNA. It also seems to bind ATP. This is DNA replication and repair protein RecF from Bacillus anthracis (strain A0248).